The primary structure comprises 189 residues: Peptidyl-tRNA hydrolase (189 aa).

Residue Tyr-18 participates in tRNA binding. Residue His-23 is the Proton acceptor of the active site. Positions 67, 69, and 115 each coordinate tRNA.

The protein belongs to the PTH family. In terms of assembly, monomer.

The protein resides in the cytoplasm. The catalysed reaction is an N-acyl-L-alpha-aminoacyl-tRNA + H2O = an N-acyl-L-amino acid + a tRNA + H(+). In terms of biological role, hydrolyzes ribosome-free peptidyl-tRNAs (with 1 or more amino acids incorporated), which drop off the ribosome during protein synthesis, or as a result of ribosome stalling. Its function is as follows. Catalyzes the release of premature peptidyl moieties from peptidyl-tRNA molecules trapped in stalled 50S ribosomal subunits, and thus maintains levels of free tRNAs and 50S ribosomes. This Leptospira borgpetersenii serovar Hardjo-bovis (strain JB197) protein is Peptidyl-tRNA hydrolase.